Here is a 633-residue protein sequence, read N- to C-terminus: Pentatricopeptide repeat-containing protein At1g43980, mitochondrial (633 aa).

A mitochondrion-targeting transit peptide spans 1–30 (MFQLLRRAHGLCMPSSLYFSRLVNRSLLSK). PPR repeat units lie at residues 50–80 (TTYW…IPDK), 81–111 (NTIT…MPER), 112–146 (DVVS…EIRP), 147–178 (TEFT…GVSR), 180–210 (NLVV…MEDR), 211–245 (DVVS…EIQP), 246–280 (DEYT…GFLS), 281–311 (NSIV…LEKW), 312–346 (DSVL…SVRP), 347–380 (DKFT…GFDL), 381–411 (DTAV…TDGK), 412–447 (DLIF…SLKP), 448–483 (DRVT…GVNP), and 484–514 (GNEH…IPFE). The interval 519-594 (IWEPILCASL…AQGSSKISIE (76 aa)) is type E motif.

It belongs to the PPR family. PCMP-E subfamily.

Its subcellular location is the mitochondrion. The protein is Pentatricopeptide repeat-containing protein At1g43980, mitochondrial (PCMP-E58) of Arabidopsis thaliana (Mouse-ear cress).